Reading from the N-terminus, the 711-residue chain is DNA ligase (711 aa).

A disordered region spans residues 1-29 (MSEDAIGQQVPAAQEAAAGAEPNSAARER). The span at 12-25 (AAQEAAAGAEPNSA) shows a compositional bias: low complexity. Residues 54–58 (DAAFD), 103–104 (SL), and glutamate 133 each bind NAD(+). The active-site N6-AMP-lysine intermediate is lysine 135. Residues arginine 156, glutamate 197, lysine 313, and lysine 337 each coordinate NAD(+). The Zn(2+) site is built by cysteine 431, cysteine 434, cysteine 450, and cysteine 456. Residues 620–709 (QGPRPLEGVT…PEAARAVARV (90 aa)) form the BRCT domain.

It belongs to the NAD-dependent DNA ligase family. LigA subfamily. Mg(2+) serves as cofactor. It depends on Mn(2+) as a cofactor.

The enzyme catalyses NAD(+) + (deoxyribonucleotide)n-3'-hydroxyl + 5'-phospho-(deoxyribonucleotide)m = (deoxyribonucleotide)n+m + AMP + beta-nicotinamide D-nucleotide.. DNA ligase that catalyzes the formation of phosphodiester linkages between 5'-phosphoryl and 3'-hydroxyl groups in double-stranded DNA using NAD as a coenzyme and as the energy source for the reaction. It is essential for DNA replication and repair of damaged DNA. The chain is DNA ligase from Salinispora tropica (strain ATCC BAA-916 / DSM 44818 / JCM 13857 / NBRC 105044 / CNB-440).